The following is an 85-amino-acid chain: Small ribosomal subunit protein bS18 (85 aa).

Belongs to the bacterial ribosomal protein bS18 family. In terms of assembly, part of the 30S ribosomal subunit. Forms a tight heterodimer with protein bS6.

Binds as a heterodimer with protein bS6 to the central domain of the 16S rRNA, where it helps stabilize the platform of the 30S subunit. The sequence is that of Small ribosomal subunit protein bS18 from Hyphomonas neptunium (strain ATCC 15444).